The sequence spans 276 residues: Sulfur carrier protein FdhD (276 aa).

Residue Cys120 is the Cysteine persulfide intermediate of the active site.

It belongs to the FdhD family.

Its subcellular location is the cytoplasm. In terms of biological role, required for formate dehydrogenase (FDH) activity. Acts as a sulfur carrier protein that transfers sulfur from IscS to the molybdenum cofactor prior to its insertion into FDH. The protein is Sulfur carrier protein FdhD of Bordetella bronchiseptica (strain ATCC BAA-588 / NCTC 13252 / RB50) (Alcaligenes bronchisepticus).